A 148-amino-acid chain; its full sequence is Putative pre-16S rRNA nuclease (148 aa).

The protein belongs to the YqgF nuclease family.

The protein resides in the cytoplasm. In terms of biological role, could be a nuclease involved in processing of the 5'-end of pre-16S rRNA. The polypeptide is Putative pre-16S rRNA nuclease (Chromohalobacter salexigens (strain ATCC BAA-138 / DSM 3043 / CIP 106854 / NCIMB 13768 / 1H11)).